Reading from the N-terminus, the 238-residue chain is Probable transcriptional regulatory protein SGO_0454 (238 aa).

The protein belongs to the TACO1 family. YeeN subfamily.

Its subcellular location is the cytoplasm. The sequence is that of Probable transcriptional regulatory protein SGO_0454 from Streptococcus gordonii (strain Challis / ATCC 35105 / BCRC 15272 / CH1 / DL1 / V288).